A 698-amino-acid chain; its full sequence is Polyribonucleotide nucleotidyltransferase (698 aa).

Asp487 and Asp493 together coordinate Mg(2+). Residues 555–614 (PKIIQIQIDPQKIGDVVGQRGKTINAIIEQTGVKIDINDEGAVSVCGTDKDMMDKAINMI) form the KH domain. The region spanning 624 to 692 (GQVFEGKVIS…KMGRISFSIK (69 aa)) is the S1 motif domain.

It belongs to the polyribonucleotide nucleotidyltransferase family. The cofactor is Mg(2+).

Its subcellular location is the cytoplasm. The enzyme catalyses RNA(n+1) + phosphate = RNA(n) + a ribonucleoside 5'-diphosphate. Involved in mRNA degradation. Catalyzes the phosphorolysis of single-stranded polyribonucleotides processively in the 3'- to 5'-direction. This chain is Polyribonucleotide nucleotidyltransferase, found in Lachnoclostridium phytofermentans (strain ATCC 700394 / DSM 18823 / ISDg) (Clostridium phytofermentans).